A 351-amino-acid chain; its full sequence is Pentatricopeptide repeat-containing protein At3g56030, mitochondrial (351 aa).

The transit peptide at M1–F41 directs the protein to the mitochondrion. 4 PPR repeats span residues R124–L158, S159–V193, D194–E224, and D232–V266.

It belongs to the PPR family. P subfamily.

The protein resides in the mitochondrion. The polypeptide is Pentatricopeptide repeat-containing protein At3g56030, mitochondrial (Arabidopsis thaliana (Mouse-ear cress)).